Consider the following 277-residue polypeptide: Putative hydro-lyase BPP3031 (277 aa).

Belongs to the D-glutamate cyclase family.

The polypeptide is Putative hydro-lyase BPP3031 (Bordetella parapertussis (strain 12822 / ATCC BAA-587 / NCTC 13253)).